A 953-amino-acid polypeptide reads, in one-letter code: Zinc finger protein 507 (953 aa).

Serine 95 carries the phosphoserine modification. C2H2-type zinc fingers lie at residues 125–147 (YQCS…IKQH), 155–185 (LMCS…ANIH), and 248–270 (YRCL…AWKH). Residue serine 427 is modified to Phosphoserine. Residues 470 to 489 (KGLATDENAPPGRRRTNSES) are disordered. 5 consecutive C2H2-type zinc fingers follow at residues 641–663 (YRCR…LRVH), 669–691 (YQCP…MIHH), 697–720 (YQCK…REQH), 758–780 (YRCD…RRIH), and 786–808 (YRCS…MWKH). Residues 831-891 (GRVLGKTPGK…KLSPTSNTSY (61 aa)) are disordered. Positions 854–891 (TGSSENAVSSSELMSQTPSEVLGTNENEKLSPTSNTSY) are enriched in polar residues. Residues 911-933 (FCCCICGFESTSKENLLDHMKEH) form a C2H2-type 9 zinc finger.

This sequence belongs to the krueppel C2H2-type zinc-finger protein family.

Its subcellular location is the nucleus. In terms of biological role, may be involved in transcriptional regulation. This Pongo abelii (Sumatran orangutan) protein is Zinc finger protein 507 (ZNF507).